We begin with the raw amino-acid sequence, 157 residues long: Class-10 pathogenesis-related protein 1 (157 aa).

It belongs to the BetVI family. In terms of tissue distribution, high levels in roots and not detectable in hypocotyls, cotyledons, stems, leaves and flower buds of untreated plants. After induction, high levels are present in the vascular bundles of leaves.

It localises to the cytoplasm. The sequence is that of Class-10 pathogenesis-related protein 1 (MSPR10-1) from Medicago sativa (Alfalfa).